A 207-amino-acid chain; its full sequence is Outer-membrane lipoprotein carrier protein (207 aa).

An N-terminal signal peptide occupies residues 1–21 (MRLIRMLLLPVLAVTTLSAHA).

It belongs to the LolA family. In terms of assembly, monomer.

The protein localises to the periplasm. Its function is as follows. Participates in the translocation of lipoproteins from the inner membrane to the outer membrane. Only forms a complex with a lipoprotein if the residue after the N-terminal Cys is not an aspartate (The Asp acts as a targeting signal to indicate that the lipoprotein should stay in the inner membrane). In Pseudomonas fluorescens (strain ATCC BAA-477 / NRRL B-23932 / Pf-5), this protein is Outer-membrane lipoprotein carrier protein.